We begin with the raw amino-acid sequence, 282 residues long: Pantothenate synthetase (282 aa).

ATP is bound at residue Met-30–His-37. His-37 serves as the catalytic Proton donor. Residue Gln-61 participates in (R)-pantoate binding. Gln-61 serves as a coordination point for beta-alanine. Gly-147–Asp-150 lines the ATP pocket. Residue Gln-153 participates in (R)-pantoate binding. ATP is bound by residues Val-176 and Lys-184–Arg-187.

It belongs to the pantothenate synthetase family. Homodimer.

Its subcellular location is the cytoplasm. The enzyme catalyses (R)-pantoate + beta-alanine + ATP = (R)-pantothenate + AMP + diphosphate + H(+). Its pathway is cofactor biosynthesis; (R)-pantothenate biosynthesis; (R)-pantothenate from (R)-pantoate and beta-alanine: step 1/1. Its function is as follows. Catalyzes the condensation of pantoate with beta-alanine in an ATP-dependent reaction via a pantoyl-adenylate intermediate. The sequence is that of Pantothenate synthetase from Bacillus cytotoxicus (strain DSM 22905 / CIP 110041 / 391-98 / NVH 391-98).